Here is a 175-residue protein sequence, read N- to C-terminus: Gamma-crystallin B (175 aa).

Beta/gamma crystallin 'Greek key' domains are found at residues 2–40 (GKITFYEDRGFQGHCYECSSDCPNLQPYFSRCNSIRVDS) and 41–83 (GCWM…RLIP). K3 carries N-linked (Glc) (glycation) lysine; in vitro glycosylation. A disulfide bridge links C19 with C23. Residues 84–88 (QHTGT) are connecting peptide. Beta/gamma crystallin 'Greek key' domains lie at 89–129 (FRMR…NVLE) and 130–172 (GSWV…RRVM).

It belongs to the beta/gamma-crystallin family.

In terms of biological role, crystallins are the dominant structural components of the vertebrate eye lens. The protein is Gamma-crystallin B (CRYGB) of Bos taurus (Bovine).